A 512-amino-acid polypeptide reads, in one-letter code: Hyaluronidase PH-20 (512 aa).

Positions Met1 to Thr35 are cleaved as a signal peptide. The N-linked (GlcNAc...) asparagine glycan is linked to Asn46. 2 cysteine pairs are disulfide-bonded: Cys60–Cys351 and Cys223–Cys237. The active-site Proton donor is the Glu147. N-linked (GlcNAc...) asparagine glycosylation occurs at Asn165. Residues Asn293 and Asn368 are each glycosylated (N-linked (GlcNAc...) asparagine). Cystine bridges form between Cys376-Cys387, Cys381-Cys435, and Cys437-Cys464.

This sequence belongs to the glycosyl hydrolase 56 family.

The protein localises to the cell membrane. It catalyses the reaction Random hydrolysis of (1-&gt;4)-linkages between N-acetyl-beta-D-glucosamine and D-glucuronate residues in hyaluronate.. Its function is as follows. Involved in sperm-egg adhesion. Upon fertilization sperm must first penetrate a layer of cumulus cells that surrounds the egg before reaching the zona pellucida. The cumulus cells are embedded in a matrix containing hyaluronic acid which is formed prior to ovulation. This protein aids in penetrating the layer of cumulus cells by digesting hyaluronic acid. The protein is Hyaluronidase PH-20 (Spam1) of Mus musculus (Mouse).